We begin with the raw amino-acid sequence, 337 residues long: Transcription initiation factor IIB (337 aa).

The TFIIB-type zinc-finger motif lies at 37–68 (EKAVCPECGSRNLVHDYERAELVCGDCGLVID). Positions 41, 44, 60, and 63 each coordinate Zn(2+). A run of 2 repeats spans residues 154 to 237 (SELD…SREL) and 248 to 329 (DYVP…ELAE).

It belongs to the TFIIB family.

Stabilizes TBP binding to an archaeal box-A promoter. Also responsible for recruiting RNA polymerase II to the pre-initiation complex (DNA-TBP-TFIIB). The chain is Transcription initiation factor IIB from Methanosarcina mazei (Methanosarcina frisia).